A 202-amino-acid chain; its full sequence is Stress enhanced protein 2, chloroplastic (202 aa).

The N-terminal 60 residues, methionine 1 to tyrosine 60, are a transit peptide targeting the chloroplast. 2 helical membrane-spanning segments follow: residues leucine 111–phenylalanine 131 and alanine 142–serine 162.

Belongs to the ELIP/psbS family.

It localises to the plastid. The protein resides in the chloroplast thylakoid membrane. In terms of biological role, may be involved in non-photochemical quenching, a process that maintains the balance between dissipation and utilization of light energy to minimize generation of oxidizing molecules, thereby protecting the plant against photo-oxidative damage. May play a photoprotective role in the thylakoid membrane in response to light stress. The polypeptide is Stress enhanced protein 2, chloroplastic (Arabidopsis thaliana (Mouse-ear cress)).